A 152-amino-acid chain; its full sequence is Endoribonuclease YbeY (152 aa).

Residues histidine 117, histidine 121, and histidine 127 each coordinate Zn(2+).

It belongs to the endoribonuclease YbeY family. It depends on Zn(2+) as a cofactor.

Its subcellular location is the cytoplasm. Its function is as follows. Single strand-specific metallo-endoribonuclease involved in late-stage 70S ribosome quality control and in maturation of the 3' terminus of the 16S rRNA. The chain is Endoribonuclease YbeY from Sulfurihydrogenibium sp. (strain YO3AOP1).